Consider the following 128-residue polypeptide: MDTVKNYLSVAFFAFWGGLARYGLTEAFSFYGTVIANLLGCFLLAFLTYFFLRKSNSRAWLTTGLGTGFVGAFTTFSSFNLDAFKLLLGGQNFGALLYFTGTIAAGFLFAWAGKQAANFAAGKLLERG.

The next 4 membrane-spanning stretches (helical) occupy residues 10-30, 32-52, 59-79, and 93-113; these read VAFF…AFSF, GTVI…YFFL, AWLT…FSSF, and FGAL…AWAG. Gly71 and Thr74 together coordinate Na(+).

This sequence belongs to the fluoride channel Fluc/FEX (TC 1.A.43) family.

It localises to the cell membrane. The enzyme catalyses fluoride(in) = fluoride(out). With respect to regulation, na(+) is not transported, but it plays an essential structural role and its presence is essential for fluoride channel function. Fluoride-specific ion channel. Important for reducing fluoride concentration in the cell, thus reducing its toxicity. The polypeptide is Fluoride-specific ion channel FluC 1 (Lactobacillus delbrueckii subsp. bulgaricus (strain ATCC 11842 / DSM 20081 / BCRC 10696 / JCM 1002 / NBRC 13953 / NCIMB 11778 / NCTC 12712 / WDCM 00102 / Lb 14)).